Reading from the N-terminus, the 666-residue chain is Calpain-10 (666 aa).

Positions 13-321 constitute a Calpain catalytic domain; it reads LFRDAAFPAS…FDEVTIGYPV (309 aa). Active-site residues include cysteine 73, histidine 238, and asparagine 263. Domain III regions lie at residues 322 to 488 and 507 to 648; these read TEAG…ISLS and EWET…IHSQ.

It belongs to the peptidase C2 family.

In terms of biological role, calcium-regulated non-lysosomal thiol-protease which catalyzes limited proteolysis of substrates involved in cytoskeletal remodeling and signal transduction. May play a role in insulin-stimulated glucose uptake. This Mus musculus (Mouse) protein is Calpain-10 (Capn10).